The primary structure comprises 884 residues: Probable LRR receptor-like serine/threonine-protein kinase PAM74 (884 aa).

The signal sequence occupies residues 1–23 (MDSPCWLLLLLLGAFAIIGCVQA). Topologically, residues 24–510 (QDQQEFISLD…TEKNSKKKFP (487 aa)) are extracellular. N143, N182, N200, N256, N289, N400, N403, N417, N433, N444, N465, and N470 each carry an N-linked (GlcNAc...) asparagine glycan. 3 LRR repeats span residues 412-433 (RVLS…AIQN), 436-457 (HLEK…FLAQ), and 460-480 (SLVI…QGLR). The helical transmembrane segment at 511 to 531 (VVIVASVASVAIIVAVLVIIF) threads the bilayer. Residues 532–884 (VLSKKKSSTV…FDTELFPRAR (353 aa)) lie on the Cytoplasmic side of the membrane. The residue at position 570 (T570) is a Phosphothreonine. One can recognise a Protein kinase domain in the interval 579 to 852 (NNFQRVVGEG…QVANELKECL (274 aa)). Residues 585 to 593 (VGEGGFGVV) and K607 contribute to the ATP site. Phosphotyrosine is present on Y652. The active-site Proton acceptor is the D704. S738 bears the Phosphoserine mark. 2 positions are modified to phosphothreonine: T739 and T744. Y752 carries the post-translational modification Phosphotyrosine.

It belongs to the protein kinase superfamily. Ser/Thr protein kinase family. In terms of assembly, binds to the ammonium transporter AMT1-1.

The protein localises to the membrane. It catalyses the reaction L-seryl-[protein] + ATP = O-phospho-L-seryl-[protein] + ADP + H(+). The catalysed reaction is L-threonyl-[protein] + ATP = O-phospho-L-threonyl-[protein] + ADP + H(+). Functionally, required for accurate photosynthesis. This is Probable LRR receptor-like serine/threonine-protein kinase PAM74 (PAM74) from Arabidopsis thaliana (Mouse-ear cress).